The sequence spans 755 residues: Beta-galactosidase (755 aa).

The active-site Proton donor is the E382. The active-site Nucleophile is the E463.

This sequence belongs to the glycosyl hydrolase 2 family.

The enzyme catalyses Hydrolysis of terminal non-reducing beta-D-galactose residues in beta-D-galactosides.. The chain is Beta-galactosidase (lacZ) from Rhizobium meliloti (Ensifer meliloti).